Consider the following 781-residue polypeptide: Catenin beta-1 (781 aa).

Alanine 2 is subject to N-acetylalanine. Residues 2–23 (ATQADLMELDMAMEPDRKAAVS) form an interaction with VCL region. Serine 23 bears the Phosphoserine; by GSK3-beta; alternate mark. Residue serine 23 is glycosylated (O-linked (GlcNAc) serine; alternate). A Phosphoserine; by GSK3-beta modification is found at serine 29. 2 positions are modified to phosphoserine; by GSK3-beta and HIPK2: serine 33 and serine 37. The tract at residues 34–57 (GIHSGATTTAPSLSGKGNPEEEDV) is disordered. Threonine 41 bears the Phosphothreonine; by GSK3-beta mark. Position 45 is a phosphoserine (serine 45). The residue at position 49 (lysine 49) is an N6-acetyllysine. A Phosphotyrosine; by PTK6 modification is found at tyrosine 64. Position 142 is a phosphotyrosine; by FYN and PTK6 (tyrosine 142). 12 ARM repeats span residues 151-191 (RAIP…IMRS), 193-234 (QMVS…IFKS), 235-276 (GGIP…VRLA), 277-318 (GGLQ…ILAS), 319-360 (GGPQ…IVEA), 361-389 (GGMQ…RNLS), 400-441 (GLLG…VCQV), 442-484 (GGIE…AQNA), 489-530 (YGLP…LREQ), 531-571 (GAIP…EIVE), 594-636 (NTIP…AEGA), and 637-666 (TAPL…SEDK). The segment at 156–178 (LTKLLNDEDQVVVNKAAVMVHQL) is interaction with BCL9. Serine 191 carries the post-translational modification Phosphoserine. A Phosphoserine; by CDK5 modification is found at serine 246. Residues tyrosine 331 and tyrosine 333 each carry the phosphotyrosine modification. Residue serine 552 is modified to Phosphoserine; by AMPK. Position 556 is a phosphothreonine (threonine 556). The residue at position 619 (cysteine 619) is an S-nitrosocysteine. Phosphoserine is present on serine 675. The segment at 720 to 781 (HSGGYGQDAL…NQLAWFDTDL (62 aa)) is disordered. A compositionally biased stretch (basic and acidic residues) spans 734 to 745 (MMEHEMGGHHPG). The tract at residues 772–781 (NQLAWFDTDL) is interaction with SCRIB.

It belongs to the beta-catenin family. Two separate complex-associated pools are found in the cytoplasm. The majority is present as component of an E-cadherin/ catenin adhesion complex composed of at least E-cadherin/CDH1 and beta-catenin/CTNNB1, and possibly alpha-catenin/CTNNA1; the complex is located to adherens junctions. The stable association of CTNNA1 is controversial as CTNNA1 was shown not to bind to F-actin when assembled in the complex. Alternatively, the CTNNA1-containing complex may be linked to F-actin by other proteins such as LIMA1. Binds NHERF1. Interacts with PTPRU (via the cytoplasmic juxtamembrane domain) and with EMD. Interacts with SESTD1 and TRPC4. Interacts with CAV1. Interacts with PTPRJ. Interacts with PKT7. Interacts with FAT1 (via the cytoplasmic domain). Interacts with CDK2, NDRG2 and NANOS1. Interacts with NEK2 and CDK5. Interacts with CARM1, CXADR, PCDH11Y and PTK6. Interacts with RAPGEF2. Interacts with SOX7; this interaction may lead to proteasomal degradation of active CTNNB1 and thus inhibition of Wnt/beta-catenin-stimulated transcription. Identified in a complex with HINT1 and MITF. Interacts with FHIT. Interacts with FERMT2. Identified in a complex with TCF4 and FERMT2. Another cytoplasmic pool is part of a large complex containing AXIN1, AXIN2, APC, CSNK1A1 and GSK3B that promotes phosphorylation on N-terminal Ser and Thr residues and ubiquitination of CTNNB1 via BTRC and its subsequent degradation by the proteasome. Wnt-dependent activation of DVL antagonizes the action of GSK3B. When GSK3B activity is inhibited the complex dissociates, CTNNB1 is dephosphorylated and is no longer targeted for destruction. The stabilized protein translocates to the nucleus, where it binds TCF/LEF-1 family members, BCL9, BCL9L and possibly also RUVBL1 and CHD8. Interacts with TAX1BP3 (via the PDZ domain); this interaction inhibits the transcriptional activity of CTNNB1. Interacts with AJAP1, BAIAP1 and CTNNA3. Interacts with TRPV4; the TRPV4 and CTNNB1 complex can interact with CDH1. Interacts with VCL. The CTNNB1 and TCF4 complex interacts with PML. Interacts with XIRP1. Binds CTNNBIP and EP300. CTNNB1 forms a ternary complex with LEF1 and EP300 that is disrupted by CTNNBIP1 binding. Interacts directly with AXIN1; the interaction is regulated by CDK2 phosphorylation of AXIN1. Interacts with GLIS2. Interacts with SCRIB. Interacts with TNIK and TCF7L2. Interacts with SLC30A9. Interacts with RORA. May interact with P-cadherin/CDH3. Interacts with RNF220. Interacts with CTNND2. Interacts (via the C-terminal region) with CBY1. The complex composed, at least, of APC, CTNNB1 and GSK3B interacts with JPT1; the interaction requires the inactive form of GSK3B (phosphorylated at 'Ser-9'). Interacts with DLG5. Interacts with FAM53B; promoting translocation to the nucleus. Interacts with TMEM170B. Interacts with AHI1. Interacts with GID8. Component of an cadherin:catenin adhesion complex composed of at least of CDH26, beta-catenin/CTNNB1, alpha-catenin/CTNNA1 and p120 catenin/CTNND1. Forms a complex comprising APPL1, RUVBL2, APPL2, HDAC1 and HDAC2. Interacts with IRF2BPL; mediates the ubiquitination and degradation of CTNNB1. Interacts with AMFR. Interacts with LMBR1L. Interacts with SOX30; prevents interaction of CTNNB1 with TCF7L2/TCF4 and leads to inhibition of Wnt signaling. Interacts with SOX9; inhibiting CTNNB1 activity by competing with the binding sites of TCF/LEF within CTNNB1, thereby inhibiting the Wnt signaling. Interacts with SPN/CD43 cytoplasmic tail. Interacts (when phosphorylated at Tyr-333) with isoform M2 of PKM (PKM2); promoting transcription activation. Interacts with PKP2 (via HEAD domain). Interacts with CDH1. Interacts (when unphosphorylated) with FLYWCH1, perhaps preventing interaction of CTNNB1 with TCF4, and thereby regulating transcription activation; phosphorylation of CTNNB1 may inhibit the interaction. Interacts (via the central armadillo domains) with probable transcriptional regulator ADNP (via N-terminal region); interaction is direct and stabilizes CTNNB1 by modulating its phosphorylation by glycogen synthase kinase-3 beta GSK3B. Interacts with NR5A2. Interacts with DSG2; the interaction promotes localization of CTNNB1 at cell junctions thus reducing its nuclear localization and subsequent transcription of CTNNB1/TCF-target genes. Phosphorylation at Ser-552 by AMPK promotes stabilization of the protein, enhancing TCF/LEF-mediated transcription. Phosphorylation by GSK3B requires prior phosphorylation of Ser-45 by another kinase. Phosphorylation proceeds then from Thr-41 to Ser-37 and Ser-33. Phosphorylated by NEK2. EGF stimulates tyrosine phosphorylation. Phosphorylated on Ser-33 and Ser-37 by HIPK2 and GSK3B, this phosphorylation triggers proteasomal degradation. Phosphorylation on Ser-191 and Ser-246 by CDK5. Phosphorylation by CDK2 regulates insulin internalization. Phosphorylation by PTK6 at Tyr-64, Tyr-142, Tyr-331 and/or Tyr-333 with the predominant site at Tyr-64 is not essential for inhibition of transcriptional activity. Phosphorylation by SRC at Tyr-333 promotes interaction with isoform M2 of PKM (PKM2); promoting transcription activation. Post-translationally, ubiquitinated by the SCF(BTRC) E3 ligase complex when phosphorylated by GSK3B, leading to its degradation. Ubiquitinated by a E3 ubiquitin ligase complex containing UBE2D1, SIAH1, CACYBP/SIP, SKP1, APC and TBL1X, leading to its subsequent proteasomal degradation. Ubiquitinated and degraded following interaction with SOX9. Ubiquitinated via 'Lys-11'- and 'Lys-29'-linked ubiquitin chains by UBR5, leading to its stabilization. In terms of processing, S-nitrosylation at Cys-619 within adherens junctions promotes VEGF-induced, NO-dependent endothelial cell permeability by disrupting interaction with E-cadherin, thus mediating disassembly adherens junctions. O-glycosylation at Ser-23 decreases nuclear localization and transcriptional activity, and increases localization to the plasma membrane and interaction with E-cadherin CDH1. Post-translationally, deacetylated at Lys-49 by SIRT1. In terms of tissue distribution, expressed in cerebellar granule neurons (at protein level). Expressed in the intestinal epithelium (at protein level). Abundantly expressed in the tooth, skin, lung, kidney, eye and brain with weak expression in the liver and heart.

Its subcellular location is the cytoplasm. It is found in the nucleus. It localises to the cytoskeleton. The protein localises to the cell junction. The protein resides in the adherens junction. Its subcellular location is the cell membrane. It is found in the microtubule organizing center. It localises to the centrosome. The protein localises to the spindle pole. The protein resides in the synapse. Its subcellular location is the cilium basal body. In terms of biological role, key downstream component of the canonical Wnt signaling pathway. In the absence of Wnt, forms a complex with AXIN1, AXIN2, APC, CSNK1A1 and GSK3B that promotes phosphorylation on N-terminal Ser and Thr residues and ubiquitination of CTNNB1 via BTRC and its subsequent degradation by the proteasome. In the presence of Wnt ligand, CTNNB1 is not ubiquitinated and accumulates in the nucleus, where it acts as a coactivator for transcription factors of the TCF/LEF family, leading to activate Wnt responsive genes. Also acts as a coactivator for other transcription factors, such as NR5A2. Promotes epithelial to mesenchymal transition/mesenchymal to epithelial transition (EMT/MET) via driving transcription of CTNNB1/TCF-target genes. Involved in the regulation of cell adhesion, as component of an E-cadherin:catenin adhesion complex. Acts as a negative regulator of centrosome cohesion. Involved in the CDK2/PTPN6/CTNNB1/CEACAM1 pathway of insulin internalization. Blocks anoikis of malignant kidney and intestinal epithelial cells and promotes their anchorage-independent growth by down-regulating DAPK2. Disrupts PML function and PML-NB formation by inhibiting RANBP2-mediated sumoylation of PML. Promotes neurogenesis by maintaining sympathetic neuroblasts within the cell cycle. Involved in chondrocyte differentiation via interaction with SOX9: SOX9-binding competes with the binding sites of TCF/LEF within CTNNB1, thereby inhibiting the Wnt signaling. Acts as a positive regulator of odontoblast differentiation during mesenchymal tooth germ formation, via promoting the transcription of differentiation factors such as LEF1, BMP2 and BMP4. Activity is repressed in a MSX1-mediated manner at the bell stage of mesenchymal tooth germ formation which prevents premature differentiation of odontoblasts. This is Catenin beta-1 from Mus musculus (Mouse).